Consider the following 475-residue polypeptide: Aspartyl/glutamyl-tRNA(Asn/Gln) amidotransferase subunit B (475 aa).

This sequence belongs to the GatB/GatE family. GatB subfamily. As to quaternary structure, heterotrimer of A, B and C subunits.

The enzyme catalyses L-glutamyl-tRNA(Gln) + L-glutamine + ATP + H2O = L-glutaminyl-tRNA(Gln) + L-glutamate + ADP + phosphate + H(+). It carries out the reaction L-aspartyl-tRNA(Asn) + L-glutamine + ATP + H2O = L-asparaginyl-tRNA(Asn) + L-glutamate + ADP + phosphate + 2 H(+). Allows the formation of correctly charged Asn-tRNA(Asn) or Gln-tRNA(Gln) through the transamidation of misacylated Asp-tRNA(Asn) or Glu-tRNA(Gln) in organisms which lack either or both of asparaginyl-tRNA or glutaminyl-tRNA synthetases. The reaction takes place in the presence of glutamine and ATP through an activated phospho-Asp-tRNA(Asn) or phospho-Glu-tRNA(Gln). The chain is Aspartyl/glutamyl-tRNA(Asn/Gln) amidotransferase subunit B from Lysinibacillus sphaericus (strain C3-41).